We begin with the raw amino-acid sequence, 990 residues long: Protein argonaute 7 (990 aa).

Residues 1–13 (MEEKTHHHHHSTN) are compositionally biased toward basic residues. The disordered stretch occupies residues 1–25 (MEEKTHHHHHSTNKHIPSSKSRTPL). The 106-residue stretch at 379 to 484 (EFLTDLPRNK…LPMELCMICE (106 aa)) folds into the PAZ domain. In terms of domain architecture, Piwi spans 649–950 (LIICVMEKKH…AAYRGRLYIE (302 aa)). Residues 953–973 (SESNGGSMNPSSVSRVGPPKT) are disordered. Residues 954–966 (ESNGGSMNPSSVS) show a composition bias toward polar residues.

The protein belongs to the argonaute family. Ago subfamily. Expressed in leaves and floral buds, and at low levels in roots.

In terms of biological role, involved in RNA-mediated post-transcriptional gene silencing (PTGS). Main component of the RNA-induced silencing complex (RISC) that binds to a short guide RNA such as a microRNA (miRNA) or small interfering RNA (siRNA). RISC uses the mature miRNA or siRNA as a guide for slicer-directed cleavage of homologous mRNAs to repress gene expression. Required for the processing of 21 nucleotide trans-acting siRNAs (ta-siRNAs) derived from TAS3a transcripts. Associates preferentially with the microRNA (miRNA) miR390 which guides the cleavage of TAS3 precursor RNA. Seems to act as miR390 specific slicer. Associates mainly with small RNAs of 21 nucleotide in length and with a 5' terminal adenosine. Acts in the RDR6/SGS3/DCL4/AGO7 trans-acting siRNA pathway involved in leaf developmental timing. Does not seem to act on leaf polarity. Required for the production of the 30-40nt bacterial-induced long siRNAs (lsiRNA). Involved in antiviral RNA silencing by contributing to efficient viral RNAs clearance. Targets less structured viral RNAs than AGO1 which is capable of targeting RNAs with more compact structures. This Arabidopsis thaliana (Mouse-ear cress) protein is Protein argonaute 7 (AGO7).